The following is a 468-amino-acid chain: Ribulose bisphosphate carboxylase large chain (468 aa).

At K5 the chain carries N6,N6,N6-trimethyllysine. Residues N114 and T164 each coordinate substrate. Residue K166 is the Proton acceptor of the active site. K168 is a substrate binding site. 3 residues coordinate Mg(2+): K192, D194, and E195. K192 carries the N6-carboxylysine modification. The Proton acceptor role is filled by H285. 3 residues coordinate substrate: R286, H318, and S370.

It belongs to the RuBisCO large chain family. Type I subfamily. As to quaternary structure, heterohexadecamer of 8 large chains and 8 small chains; disulfide-linked. The disulfide link is formed within the large subunit homodimers. Requires Mg(2+) as cofactor. The disulfide bond which can form in the large chain dimeric partners within the hexadecamer appears to be associated with oxidative stress and protein turnover.

The protein resides in the plastid. Its subcellular location is the chloroplast. It carries out the reaction 2 (2R)-3-phosphoglycerate + 2 H(+) = D-ribulose 1,5-bisphosphate + CO2 + H2O. It catalyses the reaction D-ribulose 1,5-bisphosphate + O2 = 2-phosphoglycolate + (2R)-3-phosphoglycerate + 2 H(+). Its function is as follows. RuBisCO catalyzes two reactions: the carboxylation of D-ribulose 1,5-bisphosphate, the primary event in carbon dioxide fixation, as well as the oxidative fragmentation of the pentose substrate in the photorespiration process. Both reactions occur simultaneously and in competition at the same active site. This is Ribulose bisphosphate carboxylase large chain from Solandra grandiflora (Chalice vine).